A 280-amino-acid chain; its full sequence is 2-dehydro-3-deoxyphosphooctonate aldolase (280 aa).

It belongs to the KdsA family.

The protein localises to the cytoplasm. The catalysed reaction is D-arabinose 5-phosphate + phosphoenolpyruvate + H2O = 3-deoxy-alpha-D-manno-2-octulosonate-8-phosphate + phosphate. The protein operates within carbohydrate biosynthesis; 3-deoxy-D-manno-octulosonate biosynthesis; 3-deoxy-D-manno-octulosonate from D-ribulose 5-phosphate: step 2/3. It functions in the pathway bacterial outer membrane biogenesis; lipopolysaccharide biosynthesis. The sequence is that of 2-dehydro-3-deoxyphosphooctonate aldolase from Desulfotalea psychrophila (strain LSv54 / DSM 12343).